We begin with the raw amino-acid sequence, 331 residues long: Ketol-acid reductoisomerase (NADP(+)) (331 aa).

In terms of domain architecture, KARI N-terminal Rossmann spans 2–182 (AKMYYDKDAD…GGTRAGVIET (181 aa)). Residues 25–28 (FGSQ), serine 51, serine 53, and 83–86 (DEKQ) each bind NADP(+). Histidine 108 is an active-site residue. An NADP(+)-binding site is contributed by glycine 134. The region spanning 183–328 (TFKEETETDL…KGLREMMAWI (146 aa)) is the KARI C-terminal knotted domain. Residues aspartate 191, glutamate 195, glutamate 227, and glutamate 231 each contribute to the Mg(2+) site. Serine 252 provides a ligand contact to substrate.

Belongs to the ketol-acid reductoisomerase family. Mg(2+) serves as cofactor.

The enzyme catalyses (2R)-2,3-dihydroxy-3-methylbutanoate + NADP(+) = (2S)-2-acetolactate + NADPH + H(+). It catalyses the reaction (2R,3R)-2,3-dihydroxy-3-methylpentanoate + NADP(+) = (S)-2-ethyl-2-hydroxy-3-oxobutanoate + NADPH + H(+). It participates in amino-acid biosynthesis; L-isoleucine biosynthesis; L-isoleucine from 2-oxobutanoate: step 2/4. Its pathway is amino-acid biosynthesis; L-valine biosynthesis; L-valine from pyruvate: step 2/4. Involved in the biosynthesis of branched-chain amino acids (BCAA). Catalyzes an alkyl-migration followed by a ketol-acid reduction of (S)-2-acetolactate (S2AL) to yield (R)-2,3-dihydroxy-isovalerate. In the isomerase reaction, S2AL is rearranged via a Mg-dependent methyl migration to produce 3-hydroxy-3-methyl-2-ketobutyrate (HMKB). In the reductase reaction, this 2-ketoacid undergoes a metal-dependent reduction by NADPH to yield (R)-2,3-dihydroxy-isovalerate. The protein is Ketol-acid reductoisomerase (NADP(+)) of Thermoanaerobacter pseudethanolicus (strain ATCC 33223 / 39E) (Clostridium thermohydrosulfuricum).